A 250-amino-acid chain; its full sequence is Triosephosphate isomerase (250 aa).

9–11 contacts substrate; sequence NWK. The active-site Electrophile is H95. E167 serves as the catalytic Proton acceptor. Substrate-binding positions include G173, S212, and 233–234; that span reads GG.

The protein belongs to the triosephosphate isomerase family. Homodimer.

It localises to the cytoplasm. The enzyme catalyses D-glyceraldehyde 3-phosphate = dihydroxyacetone phosphate. The protein operates within carbohydrate biosynthesis; gluconeogenesis. It functions in the pathway carbohydrate degradation; glycolysis; D-glyceraldehyde 3-phosphate from glycerone phosphate: step 1/1. Involved in the gluconeogenesis. Catalyzes stereospecifically the conversion of dihydroxyacetone phosphate (DHAP) to D-glyceraldehyde-3-phosphate (G3P). The protein is Triosephosphate isomerase of Psychromonas ingrahamii (strain DSM 17664 / CCUG 51855 / 37).